Reading from the N-terminus, the 95-residue chain is Small ribosomal subunit protein bS6 (95 aa).

Belongs to the bacterial ribosomal protein bS6 family.

In terms of biological role, binds together with bS18 to 16S ribosomal RNA. The sequence is that of Small ribosomal subunit protein bS6 from Clostridium kluyveri (strain NBRC 12016).